We begin with the raw amino-acid sequence, 100 residues long: DNA base-flipping protein (100 aa).

The protein belongs to the MGMT family. ATL subfamily.

Involved in DNA damage recognition. Binds DNA containing O(6)-methylguanine. Binds to the damaged base and flips the base out of the DNA duplex into an extrahelical conformation, which allows processing by repair proteins. The chain is DNA base-flipping protein from Vibrio parahaemolyticus serotype O3:K6 (strain AQ3810).